The following is a 248-amino-acid chain: MNKLQSYFIASVLYVMTPHAFAQGTVTIYLPGEQQTLSVGPVENVVQLVTQPQLRDRLWWPGALLTDSAAKAKALKDYQHVMAQLASWEAEADDDVAATIKSVRQQLLNLNITGRLPVKLDPDFVRVDENSNPPLVGDYTLYTVQRPVTITLLGAVSGAGQLPWQAGRSVTDYLQDHPRLAGADKNNVMVITPEGETVVAPVALWNKRHVEPPPGSQLWLGFSAHVLPEKYADLNDQIVSVLTQRVPD.

An N-terminal signal peptide occupies residues 1 to 22; that stretch reads MNKLQSYFIASVLYVMTPHAFA.

To E.coli YjbG.

This is an uncharacterized protein from Escherichia coli (strain K12).